A 166-amino-acid polypeptide reads, in one-letter code: MAASVTVIGIDPGSQCTGWGIVREASGVLTLVDCGAIRPKGGDFAARLGDLYRQLADVVRAHTPDEAAVEDVHAAQNVATALKLGQARGVVVAACAAHGVPVIDYRPSVIKKALVGTGRAEKEQVGYMVGQVLGVRPDWKLDTGDALAAAICHLNQRRLTRLAGLA.

Active-site residues include D11, E70, and D142. D11, E70, and D142 together coordinate Mg(2+).

Belongs to the RuvC family. As to quaternary structure, homodimer which binds Holliday junction (HJ) DNA. The HJ becomes 2-fold symmetrical on binding to RuvC with unstacked arms; it has a different conformation from HJ DNA in complex with RuvA. In the full resolvosome a probable DNA-RuvA(4)-RuvB(12)-RuvC(2) complex forms which resolves the HJ. It depends on Mg(2+) as a cofactor.

Its subcellular location is the cytoplasm. The catalysed reaction is Endonucleolytic cleavage at a junction such as a reciprocal single-stranded crossover between two homologous DNA duplexes (Holliday junction).. The RuvA-RuvB-RuvC complex processes Holliday junction (HJ) DNA during genetic recombination and DNA repair. Endonuclease that resolves HJ intermediates. Cleaves cruciform DNA by making single-stranded nicks across the HJ at symmetrical positions within the homologous arms, yielding a 5'-phosphate and a 3'-hydroxyl group; requires a central core of homology in the junction. The consensus cleavage sequence is 5'-(A/T)TT(C/G)-3'. Cleavage occurs on the 3'-side of the TT dinucleotide at the point of strand exchange. HJ branch migration catalyzed by RuvA-RuvB allows RuvC to scan DNA until it finds its consensus sequence, where it cleaves and resolves the cruciform DNA. This chain is Crossover junction endodeoxyribonuclease RuvC, found in Nitratidesulfovibrio vulgaris (strain ATCC 29579 / DSM 644 / CCUG 34227 / NCIMB 8303 / VKM B-1760 / Hildenborough) (Desulfovibrio vulgaris).